The following is a 164-amino-acid chain: Transcriptional repressor NrdR (164 aa).

A zinc finger spans residues 3-34 (CPKCNYHKSSVVDSRQAEDGNTIRRRRECEQC). The ATP-cone domain occupies 49–139 (LLVIKKDGTR…VYKSFKDVDE (91 aa)).

Belongs to the NrdR family. The cofactor is Zn(2+).

Its function is as follows. Negatively regulates transcription of bacterial ribonucleotide reductase nrd genes and operons by binding to NrdR-boxes. This Streptococcus pyogenes serotype M6 (strain ATCC BAA-946 / MGAS10394) protein is Transcriptional repressor NrdR.